Reading from the N-terminus, the 471-residue chain is NALCN channel auxiliary factor 2 (471 aa).

A helical transmembrane segment spans residues 47 to 67; that stretch reads LASLLFFTVLLADHLWLCAGA. The segment at 76-115 is disordered; the sequence is SAMRPPWGAGRERQPVPPRAVLPPPPPSPGEPSASSGTCG. Residues 90–105 are compositionally biased toward pro residues; that stretch reads PVPPRAVLPPPPPSPG. An N-linked (GlcNAc...) asparagine glycan is attached at asparagine 120. 2 disordered regions span residues 158 to 178 and 399 to 424; these read EPTT…APEF and HYHP…GGSR. Positions 161-171 are enriched in pro residues; that stretch reads TPAPPLRPPDS. The helical transmembrane segment at 432 to 452 threads the bilayer; the sequence is LCVLVLILLHTVVSFSSSQSG.

It belongs to the NALF family.

Its subcellular location is the membrane. Probable component of the NALCN channel complex, a channel that regulates the resting membrane potential and controls neuronal excitability. The protein is NALCN channel auxiliary factor 2 (Nalf2) of Mus musculus (Mouse).